Here is a 97-residue protein sequence, read N- to C-terminus: Putative septation protein SpoVG (97 aa).

It belongs to the SpoVG family.

Its function is as follows. Essential for sporulation. Interferes with or is a negative regulator of the pathway leading to asymmetric septation. The polypeptide is Putative septation protein SpoVG (Bacillus velezensis (strain DSM 23117 / BGSC 10A6 / LMG 26770 / FZB42) (Bacillus amyloliquefaciens subsp. plantarum)).